The following is a 142-amino-acid chain: Large ribosomal subunit protein uL13 (142 aa).

This sequence belongs to the universal ribosomal protein uL13 family. As to quaternary structure, part of the 50S ribosomal subunit.

In terms of biological role, this protein is one of the early assembly proteins of the 50S ribosomal subunit, although it is not seen to bind rRNA by itself. It is important during the early stages of 50S assembly. The sequence is that of Large ribosomal subunit protein uL13 from Opitutus terrae (strain DSM 11246 / JCM 15787 / PB90-1).